The following is a 377-amino-acid chain: MAFTMQTGDLKKLKYFIDFALENPTFLNMPQLQFVKDFVEKFGGTVPPGQFNGGSAGGKCPFGGVAGAKANEPANAPEDSEDEKSLSDPESDVELDMEGVIEADSDPAQPMGNYSKKATEEEVEQASELRAQAASAYGQQKFDEAIALYTKAIELSPGNALFHAKRGQAFLKLKKPNACIRDCDVALELNSDLAAGYKFRGRARRLLGDFELAAHDLRQACKLDFDEETDEWLKEVTPNAKKIEQHRLKQERRQAERKIKERQRDQRRARKEQEKHNASSGGSSGEFSGGNPGNGNMSDILGAMSDPEVSAAIQDILSNPGNITKYASNPKIYNLIKKIVPGGDVGAAFGQAGEKAGKPSEPKPKKDSADFVDDGLD.

Residues 68–123 form a disordered region; sequence AKANEPANAPEDSEDEKSLSDPESDVELDMEGVIEADSDPAQPMGNYSKKATEEEV. Serine 80 bears the Phosphoserine mark. Positions 89–105 are enriched in acidic residues; the sequence is PESDVELDMEGVIEADS. TPR repeat units lie at residues 126–159, 161–193, and 195–227; these read ASELRAQAASAYGQQKFDEAIALYTKAIELSPGN, LFHAKRGQAFLKLKKPNACIRDCDVALELNSDL, and AGYKFRGRARRLLGDFELAAHDLRQACKLDFDE. The stretch at 239-276 forms a coiled coil; it reads NAKKIEQHRLKQERRQAERKIKERQRDQRRARKEQEKH. Residues 243-277 show a composition bias toward basic and acidic residues; that stretch reads IEQHRLKQERRQAERKIKERQRDQRRARKEQEKHN. Disordered stretches follow at residues 243-302 and 344-377; these read IEQH…DILG and DVGAAFGQAGEKAGKPSEPKPKKDSADFVDDGLD. The span at 282–293 shows a compositional bias: gly residues; the sequence is GSSGEFSGGNPG. An STI1 domain is found at 294-336; that stretch reads NGNMSDILGAMSDPEVSAAIQDILSNPGNITKYASNPKIYNLI. The segment covering 355 to 369 has biased composition (basic and acidic residues); the sequence is KAGKPSEPKPKKDSA.

Belongs to the FAM10 family. Homotetramer. Interacts with Hsc70 as well as DNAJ homologs and Hsp90.

The protein localises to the cytoplasm. Its function is as follows. One HIP oligomer binds the ATPase domains of at least two Hsc70 molecules dependent on activation of the Hsc70 ATPase by Hsp40. Stabilizes the ADP state of Hsc70 that has a high affinity for substrate protein. Through its own chaperone activity, it may contribute to the interaction of Hsc70 with various target proteins. The chain is Hsc70-interacting protein 2 from Drosophila melanogaster (Fruit fly).